Consider the following 249-residue polypeptide: Polyhedrin (249 aa).

The protein belongs to the polyhedrin family.

In terms of biological role, major component of the virus occlusion bodies, which are large proteinaceous structures (polyhedra), that protect the virus from the outside environment for extended periods until they are ingested by insect larvae. The protein is Polyhedrin (PH) of Lepidoptera (butterflies and moths).